The chain runs to 163 residues: MPSFRPKYLHSASLDFIGNRLRRRSLTETRSNGRRLELTSRIVSAYLSRNVIAPDELPYLIQQTYGSLNETSGPGETPPAVEEQRPAVPIKKSVTDDFIVCLEDGKKFKSLKRHLTTKYGMTPDQYREKWKLPSEYPMTARNYALQRSKLARAMGLGKSRALK.

Belongs to the ros/MucR family.

This is Putative MucR family transcriptional regulatory protein RA0938 from Rhizobium meliloti (strain 1021) (Ensifer meliloti).